A 311-amino-acid chain; its full sequence is Light-independent protochlorophyllide reductase iron-sulfur ATP-binding protein (311 aa).

ATP contacts are provided by residues 10–15 and K39; that span reads GIGKST. Mg(2+) is bound at residue S14. [4Fe-4S] cluster-binding residues include C95 and C129. An ATP-binding site is contributed by 180 to 181; the sequence is NR.

Belongs to the NifH/BchL/ChlL family. In terms of assembly, homodimer. Protochlorophyllide reductase is composed of three subunits; ChlL, ChlN and ChlB. Requires [4Fe-4S] cluster as cofactor.

It is found in the plastid. The protein localises to the chloroplast. The catalysed reaction is chlorophyllide a + oxidized 2[4Fe-4S]-[ferredoxin] + 2 ADP + 2 phosphate = protochlorophyllide a + reduced 2[4Fe-4S]-[ferredoxin] + 2 ATP + 2 H2O. It participates in porphyrin-containing compound metabolism; chlorophyll biosynthesis (light-independent). Functionally, component of the dark-operative protochlorophyllide reductase (DPOR) that uses Mg-ATP and reduced ferredoxin to reduce ring D of protochlorophyllide (Pchlide) to form chlorophyllide a (Chlide). This reaction is light-independent. The L component serves as a unique electron donor to the NB-component of the complex, and binds Mg-ATP. This chain is Light-independent protochlorophyllide reductase iron-sulfur ATP-binding protein, found in Oltmannsiellopsis viridis (Marine flagellate).